Reading from the N-terminus, the 1321-residue chain is Adhesion G protein-coupled receptor A3 (1321 aa).

The N-terminal stretch at 1–33 is a signal peptide; that stretch reads MEPPGRRRGRAQPPLLLPLSLLALLALLGGGGG. Topologically, residues 34-761 are extracellular; that stretch reads GGAAALPAGC…YTQAASLLHP (728 aa). Asparagine 81 and asparagine 98 each carry an N-linked (GlcNAc...) asparagine glycan. LRR repeat units follow at residues 82-103, 106-127, 130-151, and 154-175; these read RTVTLILSNNKISELKNGSFSG, LLERLDLRNNLISSIDPGAFWG, SLKRLDLTNNRIGCLNADIFRG, and NLVRLNLSGNLFSSLSQGTFDY. 7 N-linked (GlcNAc...) asparagine glycosylation sites follow: asparagine 159, asparagine 206, asparagine 301, asparagine 332, asparagine 433, asparagine 453, and asparagine 592. Residues 187–237 enclose the LRRCT domain; that stretch reads EYLLCDCNILWMHRWVKEKNITVRDTRCVYPKSLQAQPVTGVKQELLTCDP. Positions 242–340 constitute an Ig-like domain; that stretch reads PSFYMTPSHR…GNNTRTVDIV (99 aa). Cysteine 264 and cysteine 324 are joined by a disulfide. The 168-residue stretch at 583–750 folds into the GAIN-B domain; the sequence is LDKQLSFKCN…AVLMDLTGSE (168 aa). One copy of the LRR 5 repeat lies at 594–620; it reads SNTFSSLALKNTIVEASIQLPPSLFSP. N-linked (GlcNAc...) asparagine glycans are attached at residues asparagine 652, asparagine 687, and asparagine 728. Positions 701 to 750 are GPS; that stretch reads AARWDFDLLNGQGGWKSDGCHILYSDENITTIQCYSLSNYAVLMDLTGSE. Cysteine 720 and cysteine 734 form a disulfide bridge. The helical transmembrane segment at 762–782 threads the bilayer; sequence VVYTTAIILLLCLLAVIVSYI. The Cytoplasmic portion of the chain corresponds to 783–796; sequence YHHSLIRISLKSWH. Residues 797-817 form a helical membrane-spanning segment; that stretch reads MLVNLCFHIFLTCVVFVGGIT. The Extracellular segment spans residues 818 to 826; it reads QTRNASICQ. N-linked (GlcNAc...) asparagine glycosylation is present at asparagine 821. The helical transmembrane segment at 827-847 threads the bilayer; it reads AVGIILHYSTLATVLWVGVTA. The Cytoplasmic segment spans residues 848-876; it reads RNIYKQVTKKAKRCQDPDEPPPPPRPMLR. Residues 877-897 form a helical membrane-spanning segment; that stretch reads FYLIGGGIPIIVCGITAAANI. The Extracellular segment spans residues 898–919; sequence KNYGSRPNAPYCWMAWEPSLGA. Residues 920 to 940 form a helical membrane-spanning segment; that stretch reads FYGPASFITFVNCMYFLSIFI. The Cytoplasmic portion of the chain corresponds to 941 to 996; sequence QLKRHPERKYELKEPTEEQQRLAANENGEINHQDSMSLSLISTSALENEHTFHSQL. Residues 997-1017 traverse the membrane as a helical segment; the sequence is LGASLTLLLYVALWMFGALAV. Residues 1018–1024 lie on the Extracellular side of the membrane; sequence SLYYPLD. The helical transmembrane segment at 1025–1045 threads the bilayer; it reads LVFSFVFGATSLSFSAFFVVH. The Cytoplasmic portion of the chain corresponds to 1046 to 1321; that stretch reads HCVNREDVRL…TGLWKHETTV (276 aa). Positions 1073–1083 are enriched in polar residues; that stretch reads NVQPPNSNGTN. 4 disordered regions span residues 1073–1094, 1198–1219, 1231–1265, and 1294–1321; these read NVQPPNSNGTNGEAPKCPNSSA, VEGSVQNGLPKSRLGNNEGHSR, QYNPPQQDSSDACSTLPKSSRNFEKPVSTTSKKDA, and SNGQEGPLLGTDSTGNVRTGLWKHETTV. A compositionally biased stretch (polar residues) spans 1233–1250; sequence NPPQQDSSDACSTLPKSS. The PDZ-binding motif lies at 1319–1321; it reads TTV.

Belongs to the G-protein coupled receptor 2 family. Adhesion G-protein coupled receptor (ADGR) subfamily. Interacts (via PDZ-binding motif) with DLG1.

The protein resides in the membrane. Its function is as follows. Orphan receptor that may have a role in planar cell polarity pathway. The protein is Adhesion G protein-coupled receptor A3 of Homo sapiens (Human).